Here is a 51-residue protein sequence, read N- to C-terminus: Protein I177L (51 aa).

An N-linked (GlcNAc...) asparagine; by host glycan is attached at Asn-11.

This sequence belongs to the asfivirus I177L family.

The protein localises to the virion. This Ornithodoros (relapsing fever ticks) protein is Protein I177L.